The primary structure comprises 221 residues: Urease accessory protein UreF (221 aa).

This sequence belongs to the UreF family. UreD, UreF and UreG form a complex that acts as a GTP-hydrolysis-dependent molecular chaperone, activating the urease apoprotein by helping to assemble the nickel containing metallocenter of UreC. The UreE protein probably delivers the nickel.

The protein resides in the cytoplasm. In terms of biological role, required for maturation of urease via the functional incorporation of the urease nickel metallocenter. This Microcystis aeruginosa (strain NIES-843 / IAM M-2473) protein is Urease accessory protein UreF.